Reading from the N-terminus, the 1039-residue chain is Multidrug resistance protein MdtB (1039 aa).

Transmembrane regions (helical) follow at residues 16–36 (FILR…AGII), 342–362 (DVQF…YVFL), 373–393 (VAVP…GFSI), 396–416 (LTLM…IVVI), 440–460 (IGFT…PLLF), 472–492 (FAVT…TLTP), 537–557 (WLTL…YLLI), 863–883 (LGGT…VLGV), 888–908 (FIHP…ALLA), 911–931 (MAGS…IGIV), 968–988 (ILMT…STGV), and 1002–1022 (GGLV…YLLF).

Belongs to the resistance-nodulation-cell division (RND) (TC 2.A.6) family. MdtB subfamily. As to quaternary structure, part of a tripartite efflux system composed of MdtA, MdtB and MdtC. MdtB forms a heteromultimer with MdtC.

The protein localises to the cell inner membrane. In Serratia proteamaculans (strain 568), this protein is Multidrug resistance protein MdtB.